A 137-amino-acid polypeptide reads, in one-letter code: Global transcriptional regulator Spx (137 aa).

A disulfide bond links Cys-10 and Cys-13.

It belongs to the ArsC family. Spx subfamily. Interacts with the C-terminal domain of the alpha subunit of the RNAP.

Its subcellular location is the cytoplasm. Functionally, global transcriptional regulator that plays a key role in stress response and exerts either positive or negative regulation of genes. Acts by interacting with the C-terminal domain of the alpha subunit of the RNA polymerase (RNAP). This interaction can enhance binding of RNAP to the promoter region of target genes and stimulate their transcription, or block interaction of RNAP with activator. The polypeptide is Global transcriptional regulator Spx (Streptococcus mutans serotype c (strain ATCC 700610 / UA159)).